The chain runs to 508 residues: Maturase K (508 aa).

Belongs to the intron maturase 2 family. MatK subfamily.

The protein localises to the plastid. It localises to the chloroplast. Functionally, usually encoded in the trnK tRNA gene intron. Probably assists in splicing its own and other chloroplast group II introns. In Antirrhinum majus (Garden snapdragon), this protein is Maturase K.